A 103-amino-acid polypeptide reads, in one-letter code: Large ribosomal subunit protein bL21 (103 aa).

Belongs to the bacterial ribosomal protein bL21 family. As to quaternary structure, part of the 50S ribosomal subunit. Contacts protein L20.

This protein binds to 23S rRNA in the presence of protein L20. This chain is Large ribosomal subunit protein bL21, found in Chloroflexus aurantiacus (strain ATCC 29364 / DSM 637 / Y-400-fl).